The sequence spans 401 residues: Inactive leucine-rich repeat receptor-like protein kinase CORYNE (401 aa).

The N-terminal stretch at 1–33 (MKQRRRRNGCSSSNTISLLLLFFLVFFSRTSTS) is a signal peptide. The Extracellular portion of the chain corresponds to 34-62 (TSCRRRTVKHLSTTSTSSTPLESRITSKV). The chain crosses the membrane as a helical span at residues 63–83 (IVISIVSGILTGLVSALVLAF). At 84–401 (LVRSIVKFMK…VHMLTQLHSF (318 aa)) the chain is on the cytoplasmic side. Residues 118–401 (SNGIQLLGSD…VHMLTQLHSF (284 aa)) form the Protein kinase domain. Residues 124–132 (LGSDLNGKY) and K146 contribute to the ATP site.

It belongs to the protein kinase superfamily. Ser/Thr protein kinase family. In terms of assembly, self-interacts. Parts of a tetrameric complex made of two CLV2/CRN heterodimers that can interact with CLV3 and CLE peptides. CLV2/CRN heterodimer interacts with CLV1 homodimers. Interacts with CLV1 and CLV2. CLV2/CRN heterodimer can interact with BAM3. In terms of tissue distribution, present in roots, stems, leaves, inflorescence, flowers and siliques. Mostly expressed in shoot tips and, to a lesser extent, in young organs and roots. Also expressed in the inner tissues of the proximal root meristem. Expressed in the vascular cylinder of root tips, mostly in phloem poles.

Its subcellular location is the cell membrane. It is found in the endoplasmic reticulum membrane. Functionally, involved in the perception of CLV3 and CLV3-like (CLE) peptides, that act as extracellular signals regulating meristem maintenance. Modulates root, shoot and flower apical meristem maintenance and floral organ development regulation, probably via CLAVATA (CLV)-like pathways involving at least CLV3 and CLE19. In complex with CLV2, perceives secreted CLV3-like effector proteins from plant-parasitic cyst nematodes as ligand mimics of the plant CLE signaling pathway. This recognition is required for proper feeding structure (syncytium) development and ultimately successful nematode infection. CLE14 perception by CLV2/CRN complex triggers root meristem differentiation. Required for the sensing of the root CLE peptides (e.g. CLE8, CLE9/CLE10, CLE11, CLE13, CLE14, CLE16, CLE17, CLE18, CLE20, CLE21, CLE25, CLE26, CLE40, CLE41/CLE44 and CLE45), which also involves CLV2 and leads to root growth regulation, mostly in the phloem and protophloem. Promotes the accumulation of BAM3, especially at later stages of protophloem development. The sequence is that of Inactive leucine-rich repeat receptor-like protein kinase CORYNE from Arabidopsis thaliana (Mouse-ear cress).